Consider the following 149-residue polypeptide: Golgi apparatus membrane protein tvp-18 (149 aa).

Asparagine 11 carries an N-linked (GlcNAc...) asparagine glycan. Transmembrane regions (helical) follow at residues tryptophan 18–phenylalanine 38, isoleucine 41–valine 61, asparagine 84–isoleucine 103, and serine 108–leucine 128.

Belongs to the TVP18 family.

It is found in the golgi apparatus membrane. Golgi membrane protein involved in vesicular trafficking. The protein is Golgi apparatus membrane protein tvp-18 (tvp-18) of Neurospora crassa (strain ATCC 24698 / 74-OR23-1A / CBS 708.71 / DSM 1257 / FGSC 987).